The sequence spans 291 residues: MAGMKEIRGKIKSVQNTRKITKAMEMVAASKMRRAQERMRAARPYAEKVRAIAAHMSRANPEYRHPFMVANDGVKTAGMILVTTDKGLCGGLNTNVLRASLQKFKELEEQGQKVEATAIGGKGLGFLNRFGAKVISQVVHLGDTPHLDKLIGAVKTQLDLYSEGKLSAVYLAYTRFVNTMKQETVIEQLLPLSSEHFDTNDGTPATSWDYIYEPDAQAVVDELLVRYVEALVYQAVAENMASEQSARMVAMKAASDNAKTVISELQLSYNKSRQAAITKELSEIVGGAAAV.

It belongs to the ATPase gamma chain family. In terms of assembly, F-type ATPases have 2 components, CF(1) - the catalytic core - and CF(0) - the membrane proton channel. CF(1) has five subunits: alpha(3), beta(3), gamma(1), delta(1), epsilon(1). CF(0) has three main subunits: a, b and c.

The protein localises to the cell inner membrane. Its function is as follows. Produces ATP from ADP in the presence of a proton gradient across the membrane. The gamma chain is believed to be important in regulating ATPase activity and the flow of protons through the CF(0) complex. The polypeptide is ATP synthase gamma chain (Burkholderia pseudomallei (strain 1106a)).